The following is a 231-amino-acid chain: Putative Nudix hydrolase FPV054 (231 aa).

A Nudix hydrolase domain is found at 74–217 (SKRRSFSEIL…SNEKYEYLHF (144 aa)). Positions 125–146 (GRVKNKESIYQCLSRELSEESD) match the Nudix box motif. Glu131 contributes to the Mg(2+) binding site. The active-site Nucleophile is Glu140. Glu144 and Asp165 together coordinate Mg(2+).

Belongs to the Nudix hydrolase family. The cofactor is Mg(2+). It depends on Mn(2+) as a cofactor.

Decapping enzyme required for the removal of the 5'-end m7GpppN cap tethered to viral and host mRNAs to allow their decay in cells. May therefore accelerate viral and cellular mRNA turnover to eliminate competing host mRNAs and allow stage-specific synthesis of viral proteins. Acceleration of the turnover of cellular transcripts may even promote the shutoff of host protein synthesis. Does not cleave unmethylated RNAs or RNAs shorter than 24 nucleotides. The sequence is that of Putative Nudix hydrolase FPV054 from Vertebrata (FPV).